Here is a 224-residue protein sequence, read N- to C-terminus: Urease accessory protein UreF (224 aa).

It belongs to the UreF family. As to quaternary structure, ureD, UreF and UreG form a complex that acts as a GTP-hydrolysis-dependent molecular chaperone, activating the urease apoprotein by helping to assemble the nickel containing metallocenter of UreC. The UreE protein probably delivers the nickel.

The protein resides in the cytoplasm. Functionally, required for maturation of urease via the functional incorporation of the urease nickel metallocenter. The protein is Urease accessory protein UreF of Pseudomonas putida (strain GB-1).